We begin with the raw amino-acid sequence, 452 residues long: Probable glycine dehydrogenase (decarboxylating) subunit 1 (452 aa).

The protein belongs to the GcvP family. N-terminal subunit subfamily. The glycine cleavage system is composed of four proteins: P, T, L and H. In this organism, the P 'protein' is a heterodimer of two subunits.

It carries out the reaction N(6)-[(R)-lipoyl]-L-lysyl-[glycine-cleavage complex H protein] + glycine + H(+) = N(6)-[(R)-S(8)-aminomethyldihydrolipoyl]-L-lysyl-[glycine-cleavage complex H protein] + CO2. In terms of biological role, the glycine cleavage system catalyzes the degradation of glycine. The P protein binds the alpha-amino group of glycine through its pyridoxal phosphate cofactor; CO(2) is released and the remaining methylamine moiety is then transferred to the lipoamide cofactor of the H protein. The chain is Probable glycine dehydrogenase (decarboxylating) subunit 1 from Alcanivorax borkumensis (strain ATCC 700651 / DSM 11573 / NCIMB 13689 / SK2).